Reading from the N-terminus, the 103-residue chain is 11.2 kDa protein (103 aa).

This is 11.2 kDa protein from Pseudomonas phage Pf1 (Bacteriophage Pf1).